A 69-amino-acid polypeptide reads, in one-letter code: Protein translocase subunit SecE (69 aa).

A helical membrane pass occupies residues 43–63 (VAGAGILVIGFVGFLIYVLLT).

This sequence belongs to the SecE/SEC61-gamma family. In terms of assembly, component of the Sec protein translocase complex. Heterotrimer consisting of SecY (alpha), SecG (beta) and SecE (gamma) subunits. The heterotrimers can form oligomers, although 1 heterotrimer is thought to be able to translocate proteins. Interacts with the ribosome. May interact with SecDF, and other proteins may be involved.

It localises to the cell membrane. Essential subunit of the Sec protein translocation channel SecYEG. Clamps together the 2 halves of SecY. May contact the channel plug during translocation. The polypeptide is Protein translocase subunit SecE (Methanococcoides burtonii (strain DSM 6242 / NBRC 107633 / OCM 468 / ACE-M)).